The following is a 179-amino-acid chain: Large ribosomal subunit protein uL5 (179 aa).

The protein belongs to the universal ribosomal protein uL5 family. As to quaternary structure, part of the 50S ribosomal subunit; part of the 5S rRNA/L5/L18/L25 subcomplex. Contacts the 5S rRNA and the P site tRNA. Forms a bridge to the 30S subunit in the 70S ribosome.

Its function is as follows. This is one of the proteins that bind and probably mediate the attachment of the 5S RNA into the large ribosomal subunit, where it forms part of the central protuberance. In the 70S ribosome it contacts protein S13 of the 30S subunit (bridge B1b), connecting the 2 subunits; this bridge is implicated in subunit movement. Contacts the P site tRNA; the 5S rRNA and some of its associated proteins might help stabilize positioning of ribosome-bound tRNAs. The protein is Large ribosomal subunit protein uL5 of Rickettsia rickettsii (strain Iowa).